A 138-amino-acid chain; its full sequence is Large ribosomal subunit protein uL16 (138 aa).

Belongs to the universal ribosomal protein uL16 family. As to quaternary structure, part of the 50S ribosomal subunit.

Its function is as follows. Binds 23S rRNA and is also seen to make contacts with the A and possibly P site tRNAs. In Neisseria gonorrhoeae (strain ATCC 700825 / FA 1090), this protein is Large ribosomal subunit protein uL16.